Reading from the N-terminus, the 1148-residue chain is Trafficking protein particle complex subunit 9 (1148 aa).

Residues Ser566 and Ser953 each carry the phosphoserine modification.

It belongs to the NIBP family. Component of the multisubunit TRAPP (transport protein particle) complex, which includes at least TRAPPC2, TRAPPC2L, TRAPPC3, TRAPPC3L, TRAPPC4, TRAPPC5, TRAPPC8, TRAPPC9, TRAPPC10, TRAPPC11 and TRAPPC12. Directly interacts with IKBKB and MAP3K14. In terms of tissue distribution, expressed in neurons of the pyramidal layer of the cortex, in spinal cord motor neurons and white matter neurons (at protein level).

The protein resides in the golgi apparatus. Its subcellular location is the cis-Golgi network. The protein localises to the endoplasmic reticulum. It localises to the cytoplasm. Functions as an activator of NF-kappa-B through increased phosphorylation of the IKK complex. May function in neuronal cells differentiation. May play a role in vesicular transport from endoplasmic reticulum to Golgi. This is Trafficking protein particle complex subunit 9 (Trappc9) from Mus musculus (Mouse).